A 187-amino-acid polypeptide reads, in one-letter code: Large ribosomal subunit protein uL6 (187 aa).

This sequence belongs to the universal ribosomal protein uL6 family. As to quaternary structure, part of the 50S ribosomal subunit.

Functionally, this protein binds to the 23S rRNA, and is important in its secondary structure. It is located near the subunit interface in the base of the L7/L12 stalk, and near the tRNA binding site of the peptidyltransferase center. This is Large ribosomal subunit protein uL6 from Roseiflexus sp. (strain RS-1).